The chain runs to 191 residues: GTP-binding protein CIN4 (191 aa).

GTP-binding positions include 23-30, 69-73, and 131-134; these read GLDNSGKS, DIGGQ, and NKID.

Functionally, implicated in yeast microtubule function. In Saccharomyces cerevisiae (strain ATCC 204508 / S288c) (Baker's yeast), this protein is GTP-binding protein CIN4 (CIN4).